A 235-amino-acid chain; its full sequence is Protocatechuate 3,4-dioxygenase beta chain (235 aa).

Residues Tyr107, Tyr146, His159, and His161 each coordinate Fe cation.

Belongs to the intradiol ring-cleavage dioxygenase family. The enzyme is an oligomer of 12 copies of the alpha and beta chains. Fe(3+) serves as cofactor.

The enzyme catalyses 3,4-dihydroxybenzoate + O2 = 3-carboxy-cis,cis-muconate + 2 H(+). The protein operates within aromatic compound metabolism; beta-ketoadipate pathway; 3-carboxy-cis,cis-muconate from 3,4-dihydroxybenzoate: step 1/1. Functionally, plays an essential role in the utilization of numerous aromatic and hydroaromatic compounds via the beta-ketoadipate pathway. The polypeptide is Protocatechuate 3,4-dioxygenase beta chain (pcaH) (Burkholderia cepacia (Pseudomonas cepacia)).